We begin with the raw amino-acid sequence, 3242 residues long: tRNA nuclease CdiA (3242 aa).

An N-terminal signal peptide occupies residues 1–32 (MHQPPVRFTYRLLSYLISTIIAGQPLLPAVGA). Residues 36–322 (PQNGAGMDKA…AGGNLSVTGT (287 aa)) are two-partner system transport domain (TPS). The FHA-1 stretch occupies residues 351–1376 (GELTAGQNAM…IVVRTGHLLN (1026 aa)). The interval 1377–1668 (QREGFSATTT…TGQTGISDDW (292 aa)) is receptor-binding domain (RBD). The segment at 1668 to 1852 (WPLPSGNNGY…LSPEDITLHN (185 aa)) is YP domain. Residues 1853 to 1913 (GSVISGNNVQ…DLSAIGDISN (61 aa)) are periplasmic FHA-1 repeat (pFR). Residues 2021–2631 (DNSASSTTSQ…TSKYDSKQTS (611 aa)) are FHA-2. Positions 2075–2091 (RESKNSRNGRSESHESH) are enriched in basic and acidic residues. Disordered stretches follow at residues 2075–2094 (RESKNSRNGRSESHESHAAV), 2310–2333 (GSSKTTHDRREAGTTQSQSASTIG), and 2439–2481 (TMAS…NAGN). Residues 2322-2333 (GTTQSQSASTIG) show a composition bias toward polar residues. The segment at 2969-3242 (GVDPSKLTED…IESALKGYGI (274 aa)) is DUF638-CT domain; not toxic when added to the outside of E.coli, does not interfere with F-pilus mediated conjugation, toxic when expressed intracellularly. The interval 2972–3015 (PSKLTEDQKQTVSTLATLSAGMAGGIASGDVAGAAAGAGAGKNV) is pre-toxin (PT) domain. Residues 3016-3019 (VENN) carry the VENN CT cleavage motif motif. The interval 3016–3097 (VENNALSLVA…KYLSSLHDKY (82 aa)) is toxin import domain; sufficient to import the tRNA nuclease domain of colicin E5 into E.coli, may bind F-pili. The segment at 3016-3242 (VENNALSLVA…IESALKGYGI (227 aa)) is CT domain; toxic when added to the outside of E.coli and when expressed intracellularly. The segment at 3020–3141 (ALSLVARGCA…SENDPKQQNE (122 aa)) is inner membrane translocation domain (IMTD), targets protein to FtsH. The interval 3020-3242 (ALSLVARGCA…IESALKGYGI (223 aa)) is C-terminal effector domain (CT). A tRNase function, does not interfere with F-pilus mediated conjugation region spans residues 3098–3242 (GSGAASNPNI…IESALKGYGI (145 aa)). The interval 3116 to 3146 (KVELGGSGSGTGTPPPSENDPKQQNEKTVDK) is disordered. Positions 3134–3146 (NDPKQQNEKTVDK) are enriched in basic and acidic residues. Positions 3137–3238 (KQQNEKTVDK…AINKIESALK (102 aa)) form a coiled coil. Catalysis depends on residues D3170, H3193, and E3196.

The protein in the N-terminal section; belongs to the CdiA toxin family. As to quaternary structure, the C-terminal (CT) domain interacts with cognate CdiI but not non-cognate CdiI from D.dadantii strain 3937. CdiA-CT also interacts with CysK; this is blocked upon preincubation with O-acetyl-L-serine. CysK forms a complex with CdiA-CT/CdiI. One CdiA toxin subunit binds to each subunit of the CysK homodimer, and one CdiI immunity protein binds to each toxin subunit; the immune complex is thus a dimer of trimers. The 4 C-terminal residues of CdiA fit into the active site of CysK. The cofactor is a divalent metal cation.

The protein resides in the secreted. It localises to the target cell membrane. Its subcellular location is the target cell. The protein localises to the target cell cytoplasm. In terms of biological role, toxic component of a toxin-immunity protein module, which functions as a cellular contact-dependent growth inhibition (CDI) system. CDI modules allow bacteria to communicate with and inhibit the growth of closely related neighboring bacteria in a contact-dependent fashion (target cell counts decrease 100- to 1000-fold). CdiA toxicity is neutralized by its cognate immunity protein CdiI, but not by CdiI from other bacteria. Uses heterotrimeric OmpC and OmpF as target cell outer membrane receptors; receptor function depends on polymorphisms in extracellular loops L4 and L5 of OmpC; interacts with itself and closely related bacteria but also with OmpC from E.cloacae ATCC 13047. Its ability to preferentially bind to 'self' receptors suggests it may also play a role in self-recognition and kin selection. A bamA mutation that decreases its expression about 5-fold is partially resistant to this strain of CdiA, probably due to decreased outer membrane receptor protein assembly. Isolated CdiA-CT is imported in an F-pilus-mediated fashion; CdiA-CT inhibits F-mediated conjugation, probably via its N-terminus (residues 3016-3097), although it is not clear if this is physiologically significant. Gains access to the cytoplasm of target cells by using integral inner membrane protein FtsH. The C-terminal domain (CT) cleaves within tRNA anticodon loops; this activity is inhibited by cognate CdiI. tRNase activity of CdiA-CT is stimulated by CysK, although the extreme C-terminus (residues 3098-3242) has tRNase activity in the absence of CysK. In vivo CDI toxicity requires CysK. CysK stabilizes CdiA-CT, allowing it to bind tRNA substrate; neither CdiA-CT nor CysK bind tRNA alone in vitro. Purified CdiA-CT (residues 3016-3242) inhibits E.coli cell growth when added to cultures alone or in complex with cognate CdiI, growth is inhibited when cognate CdiI is present within the cell but not when a CdiA-CT/CdiI complex is added extracellularly, suggesting CdiA-CT alone but not the CdiA-CT/CdiI complex is imported into the target cell. Its function is as follows. The CdiA protein is thought to be exported from the cell through the central lumen of CdiB, the other half of its two-partner system (TPS). The TPS domain probably remains associated with CdiB while the FHA-1 domain forms an extended filament with the receptor-binding domain (RBD) at its extremity; in the secretion arrested state the C-terminus of the RBD and YP domains form a hairpin-like structure as the FHA-2, PT and CT domains are periplasmic. The YP domain is probably responsible for this arrest at the point where it re-enters the host cell periplasm. Upon binding to a target cell outer membrane receptor (heterotrimeric OmpC-OmpF for this CDI) a signal is transmitted to activate secretion. The filament elongates slightly, the rest of CdiA is secreted and the FHA-2 domain becomes stably associated with the target cell's outer membrane where it facilitates entry of the toxic CT domain into the target cell periplasm. From there the toxic CT domain is cleaved and gains access to the target cell cytoplasm via an inner membrane protein (FtsH for this CDI). In Escherichia coli O6:K15:H31 (strain 536 / UPEC), this protein is tRNA nuclease CdiA.